We begin with the raw amino-acid sequence, 265 residues long: Energy-coupling factor transporter transmembrane protein EcfT (265 aa).

The next 5 helical transmembrane spans lie at 32 to 52 (MVLL…VFII), 72 to 92 (LVII…GRVI), 115 to 135 (LIML…IALT), 150 to 170 (VPAH…PTLM), and 245 to 265 (LAAF…RFIW).

This sequence belongs to the energy-coupling factor EcfT family. Forms a stable energy-coupling factor (ECF) transporter complex composed of 2 membrane-embedded substrate-binding proteins (S component), 2 ATP-binding proteins (A component) and 2 transmembrane proteins (T component). May be able to interact with more than 1 S component at a time.

It is found in the cell membrane. Functionally, transmembrane (T) component of an energy-coupling factor (ECF) ABC-transporter complex. Unlike classic ABC transporters this ECF transporter provides the energy necessary to transport a number of different substrates. This is Energy-coupling factor transporter transmembrane protein EcfT from Thermosediminibacter oceani (strain ATCC BAA-1034 / DSM 16646 / JW/IW-1228P).